A 476-amino-acid chain; its full sequence is Bifunctional protein HldE (476 aa).

Positions 1 to 319 are ribokinase; the sequence is MKVSLPAFEK…EALALHHGES (319 aa). 195-198 contacts ATP; the sequence is NMSE. Asp-264 is a catalytic residue. Positions 345–476 are cytidylyltransferase; sequence MTNGCFDILH…AIIQNIMANQ (132 aa).

It in the N-terminal section; belongs to the carbohydrate kinase PfkB family. In the C-terminal section; belongs to the cytidylyltransferase family. As to quaternary structure, homodimer.

It catalyses the reaction D-glycero-beta-D-manno-heptose 7-phosphate + ATP = D-glycero-beta-D-manno-heptose 1,7-bisphosphate + ADP + H(+). The enzyme catalyses D-glycero-beta-D-manno-heptose 1-phosphate + ATP + H(+) = ADP-D-glycero-beta-D-manno-heptose + diphosphate. It participates in nucleotide-sugar biosynthesis; ADP-L-glycero-beta-D-manno-heptose biosynthesis; ADP-L-glycero-beta-D-manno-heptose from D-glycero-beta-D-manno-heptose 7-phosphate: step 1/4. It functions in the pathway nucleotide-sugar biosynthesis; ADP-L-glycero-beta-D-manno-heptose biosynthesis; ADP-L-glycero-beta-D-manno-heptose from D-glycero-beta-D-manno-heptose 7-phosphate: step 3/4. Functionally, catalyzes the phosphorylation of D-glycero-D-manno-heptose 7-phosphate at the C-1 position to selectively form D-glycero-beta-D-manno-heptose-1,7-bisphosphate. Catalyzes the ADP transfer from ATP to D-glycero-beta-D-manno-heptose 1-phosphate, yielding ADP-D-glycero-beta-D-manno-heptose. This is Bifunctional protein HldE from Shewanella sp. (strain W3-18-1).